The sequence spans 167 residues: Endoribonuclease YbeY (167 aa).

Zn(2+)-binding residues include histidine 131, histidine 135, and histidine 141.

The protein belongs to the endoribonuclease YbeY family. Zn(2+) serves as cofactor.

It localises to the cytoplasm. Its function is as follows. Single strand-specific metallo-endoribonuclease involved in late-stage 70S ribosome quality control and in maturation of the 3' terminus of the 16S rRNA. The chain is Endoribonuclease YbeY from Rickettsia rickettsii (strain Sheila Smith).